We begin with the raw amino-acid sequence, 105 residues long: Large ribosomal subunit protein uL24 (105 aa).

The protein belongs to the universal ribosomal protein uL24 family. Part of the 50S ribosomal subunit.

One of two assembly initiator proteins, it binds directly to the 5'-end of the 23S rRNA, where it nucleates assembly of the 50S subunit. In terms of biological role, one of the proteins that surrounds the polypeptide exit tunnel on the outside of the subunit. This is Large ribosomal subunit protein uL24 from Francisella tularensis subsp. novicida (strain U112).